We begin with the raw amino-acid sequence, 428 residues long: Histidinol dehydrogenase (428 aa).

Residues Tyr-125, Gln-187, and Asn-210 each coordinate NAD(+). Ser-234, Gln-256, and His-259 together coordinate substrate. The Zn(2+) site is built by Gln-256 and His-259. Residues Glu-323 and His-324 each act as proton acceptor in the active site. Substrate is bound by residues His-324, Asp-357, Glu-411, and His-416. Residue Asp-357 participates in Zn(2+) binding. Residue His-416 participates in Zn(2+) binding.

It belongs to the histidinol dehydrogenase family. Requires Zn(2+) as cofactor.

The catalysed reaction is L-histidinol + 2 NAD(+) + H2O = L-histidine + 2 NADH + 3 H(+). Its pathway is amino-acid biosynthesis; L-histidine biosynthesis; L-histidine from 5-phospho-alpha-D-ribose 1-diphosphate: step 9/9. In terms of biological role, catalyzes the sequential NAD-dependent oxidations of L-histidinol to L-histidinaldehyde and then to L-histidine. This Bacteroides thetaiotaomicron (strain ATCC 29148 / DSM 2079 / JCM 5827 / CCUG 10774 / NCTC 10582 / VPI-5482 / E50) protein is Histidinol dehydrogenase.